Reading from the N-terminus, the 219-residue chain is Transmembrane protein 179B (219 aa).

Helical transmembrane passes span 6–26 (PLLL…ITAA), 69–89 (ISVC…YIAF), 105–125 (LGLS…LKIG), and 167–187 (AETA…LVLI). Residues 195-219 (IRPGTEDPSAPPSETEPFFNRPGRP) form a disordered region.

This sequence belongs to the TMEM179 family.

It localises to the membrane. This Danio rerio (Zebrafish) protein is Transmembrane protein 179B (tmem179b).